A 180-amino-acid polypeptide reads, in one-letter code: Large ribosomal subunit protein uL6 (180 aa).

Belongs to the universal ribosomal protein uL6 family. Part of the 50S ribosomal subunit.

Its function is as follows. This protein binds to the 23S rRNA, and is important in its secondary structure. It is located near the subunit interface in the base of the L7/L12 stalk, and near the tRNA binding site of the peptidyltransferase center. This Anaeromyxobacter dehalogenans (strain 2CP-1 / ATCC BAA-258) protein is Large ribosomal subunit protein uL6.